Reading from the N-terminus, the 310-residue chain is Protein BCCIP homolog (310 aa).

Residues 1-59 (MASNAKRRALEPERLPERNEEEEDDMEGDNSDESDDIEDDESEEEEEVNEEVNIDFEAY) form a disordered region. Positions 8-18 (RALEPERLPER) are enriched in basic and acidic residues. Residues 19-54 (NEEEEDDMEGDNSDESDDIEDDESEEEEEVNEEVNI) are compositionally biased toward acidic residues.

The protein belongs to the BCP1 family.

Its subcellular location is the nucleus. The protein resides in the cytoplasm. It is found in the cytoskeleton. It localises to the microtubule organizing center. The protein localises to the centrosome. Its subcellular location is the centriole. The protein resides in the spindle pole. In terms of biological role, during interphase, required for microtubule organizing and anchoring activities. During mitosis, required for the organization and stabilization of the spindle pole. May promote cell cycle arrest and DNA repair. The protein is Protein BCCIP homolog (bccip) of Xenopus tropicalis (Western clawed frog).